Reading from the N-terminus, the 155-residue chain is 2-C-methyl-D-erythritol 2,4-cyclodiphosphate synthase (155 aa).

The a divalent metal cation site is built by Asp9 and His11. 4-CDP-2-C-methyl-D-erythritol 2-phosphate-binding positions include 9–11 (DSH) and 35–36 (HS). His43 lines the a divalent metal cation pocket. 57-59 (DIG) provides a ligand contact to 4-CDP-2-C-methyl-D-erythritol 2-phosphate.

It belongs to the IspF family. As to quaternary structure, homotrimer. A divalent metal cation is required as a cofactor.

It carries out the reaction 4-CDP-2-C-methyl-D-erythritol 2-phosphate = 2-C-methyl-D-erythritol 2,4-cyclic diphosphate + CMP. Its pathway is isoprenoid biosynthesis; isopentenyl diphosphate biosynthesis via DXP pathway; isopentenyl diphosphate from 1-deoxy-D-xylulose 5-phosphate: step 4/6. In terms of biological role, involved in the biosynthesis of isopentenyl diphosphate (IPP) and dimethylallyl diphosphate (DMAPP), two major building blocks of isoprenoid compounds. Catalyzes the conversion of 4-diphosphocytidyl-2-C-methyl-D-erythritol 2-phosphate (CDP-ME2P) to 2-C-methyl-D-erythritol 2,4-cyclodiphosphate (ME-CPP) with a corresponding release of cytidine 5-monophosphate (CMP). This chain is 2-C-methyl-D-erythritol 2,4-cyclodiphosphate synthase, found in Koribacter versatilis (strain Ellin345).